The sequence spans 131 residues: MRHRKSGRQLNRNSSHRQAMFRNMAGSLVRHEIIKTTLPKAKELRRVVEPLITLAKTDSVANRRLAFARTRDNEIVAKLFNELGPRFASRAGGYTRILKCGFRAGDNAPMAYIEFVDHAEATAPAAEATAE.

It belongs to the bacterial ribosomal protein bL17 family. As to quaternary structure, part of the 50S ribosomal subunit. Contacts protein L32.

The sequence is that of Large ribosomal subunit protein bL17 from Sodalis glossinidius (strain morsitans).